A 359-amino-acid chain; its full sequence is Lipopolysaccharide 1,6-galactosyltransferase (359 aa).

Residues Gln244 and Glu276 each coordinate UDP.

The protein belongs to the glycosyltransferase group 1 family. Glycosyltransferase 4 subfamily.

The catalysed reaction is alpha-D-Glc-(1-&gt;3)-[L-alpha-D-Hep-(1-&gt;7)]-4-O-PO3(2-)-L-alpha-D-Hep-(1-&gt;3)-4-O-PO3(2-)-L-alpha-D-Hep-(1-&gt;5)-[alpha-Kdo-(2-&gt;4)]-alpha-Kdo-(2-&gt;6)-lipid A + UDP-alpha-D-galactose = alpha-D-Gal-(1-&gt;6)-alpha-D-Glc-(1-&gt;3)-[L-alpha-D-Hep-(1-&gt;7)]-4-O-PO3(2-)-L-alpha-D-Hep-(1-&gt;3)-4-O-PO3(2-)-L-alpha-D-Hep-(1-&gt;5)-[alpha-Kdo-(2-&gt;4)]-alpha-Kdo-(2-&gt;6)-lipid A + UDP + H(+). It functions in the pathway bacterial outer membrane biogenesis; LPS core biosynthesis. Galactosyltransferase involved in the biosynthesis of the core oligosaccharide region of lipopolysaccharide (LPS). Catalyzes the addition of galactose from UDP-galactose to the first glucose residue of the LPS outer core. The polypeptide is Lipopolysaccharide 1,6-galactosyltransferase (Salmonella typhimurium (strain LT2 / SGSC1412 / ATCC 700720)).